Reading from the N-terminus, the 265-residue chain is Undecaprenyl-diphosphatase (265 aa).

The next 8 membrane-spanning stretches (helical) occupy residues 1–21, 40–60, 87–107, 113–133, 151–173, 188–208, 214–234, and 244–264; these read MDWL…FLPI, GLAF…LAFH, WAVI…ENVI, ASLV…WADV, IIGF…TITA, SFLL…VELI, VAWG…WLCI, and IGML…LVWV.

It belongs to the UppP family.

The protein resides in the cell inner membrane. It carries out the reaction di-trans,octa-cis-undecaprenyl diphosphate + H2O = di-trans,octa-cis-undecaprenyl phosphate + phosphate + H(+). Functionally, catalyzes the dephosphorylation of undecaprenyl diphosphate (UPP). Confers resistance to bacitracin. This chain is Undecaprenyl-diphosphatase, found in Chromohalobacter salexigens (strain ATCC BAA-138 / DSM 3043 / CIP 106854 / NCIMB 13768 / 1H11).